Here is a 660-residue protein sequence, read N- to C-terminus: Methionine--tRNA ligase (660 aa).

The 'HIGH' region motif lies at 15-25 (YYPSDKLHIGH). The short motif at 311 to 315 (KMSKS) is the 'KMSKS' region element. Lys-314 is a binding site for ATP. The tract at residues 535–554 (LMGGSKKPEEAPKDEKEESD) is disordered. Positions 540–550 (KKPEEAPKDEK) are enriched in basic and acidic residues. A tRNA-binding domain is found at 560-660 (DFSKVELRIA…GALPNGSLVK (101 aa)).

It belongs to the class-I aminoacyl-tRNA synthetase family. MetG type 2B subfamily. In terms of assembly, homodimer.

The protein resides in the cytoplasm. The enzyme catalyses tRNA(Met) + L-methionine + ATP = L-methionyl-tRNA(Met) + AMP + diphosphate. In terms of biological role, is required not only for elongation of protein synthesis but also for the initiation of all mRNA translation through initiator tRNA(fMet) aminoacylation. The polypeptide is Methionine--tRNA ligase (metG) (Halalkalibacterium halodurans (strain ATCC BAA-125 / DSM 18197 / FERM 7344 / JCM 9153 / C-125) (Bacillus halodurans)).